The primary structure comprises 210 residues: MAKNAMLCLLILSVVLALAFATNKKDDEEPENHSTGIFGKVGRVVTVALAMSSRLGGANATRGGGAVYGRNLKSNQLPNNNWMAPPPPMAMRSAKVYDSKHSPAEYLKKFAQDFRRKTGTHSQRHHEETTLEQEKRGAPAGPDPIHHQDTTFEQEKRGAPAGPDPIHHQDTTLEQEKRVAGAGPDPIHHQDTKFEQEKRGAPAGPDPIHH.

The first 21 residues, 1–21 (MAKNAMLCLLILSVVLALAFA), serve as a signal peptide directing secretion. Residues 21–83 (ATNKKDDEEP…SNQLPNNNWM (63 aa)) are required for secretion from the host cytoplasm to the host apoplasm. Asparagine 32 and asparagine 59 each carry an N-linked (GlcNAc...) asparagine glycan. Positions 115 to 210 (RRKTGTHSQR…APAGPDPIHH (96 aa)) are disordered. Composition is skewed to basic and acidic residues over residues 125 to 137 (HHEE…EKRG), 144 to 158 (PIHH…EKRG), 165 to 179 (PIHH…EKRV), and 186 to 200 (PIHH…EKRG). The stretch at 127 to 135 (EETTLEQEK) is one A-1 repeat. The interval 129 to 198 (TTLEQEKRGA…HQDTKFEQEK (70 aa)) is 4 X approximate repeat A. A CLE-1 repeat occupies 136 to 147 (RGAPAGPDPIHH). The tract at residues 136 to 210 (RGAPAGPDPI…APAGPDPIHH (75 aa)) is 4 X approximate repeat CLE. One copy of the A-2 repeat lies at 148 to 156 (QDTTFEQEK). The stretch at 157–168 (RGAPAGPDPIHH) is one CLE-2 repeat. The A-3 repeat unit spans residues 169 to 177 (QDTTLEQEK). A CLE-3 repeat occupies 178–189 (RVAGAGPDPIHH). Residues 190–198 (QDTKFEQEK) form an A-4 repeat. The stretch at 199–210 (RGAPAGPDPIHH) is one CLE-4 repeat.

It belongs to the CLV3/ESR signal peptide family. As to expression, highly expressed exclusively within the dorsal esophageal gland cell during syncytium formation in host plants.

It localises to the secreted. The protein resides in the host cytoplasm. Its subcellular location is the host extracellular space. The protein localises to the extracellular space. It is found in the apoplast. Its function is as follows. Mimics host plant CLE extracellular signal peptides that regulate cell fate. May play a role in the differentiation or division of feeding cells (syncytia) induced in plant roots during infection. The polypeptide is CLAVATA3/ESR (CLE)-related protein 4D (CLE-4D) (Globodera rostochiensis (Golden nematode worm)).